The primary structure comprises 235 residues: Phosphoribosylaminoimidazole-succinocarboxamide synthase (235 aa).

This sequence belongs to the SAICAR synthetase family.

The enzyme catalyses 5-amino-1-(5-phospho-D-ribosyl)imidazole-4-carboxylate + L-aspartate + ATP = (2S)-2-[5-amino-1-(5-phospho-beta-D-ribosyl)imidazole-4-carboxamido]succinate + ADP + phosphate + 2 H(+). It participates in purine metabolism; IMP biosynthesis via de novo pathway; 5-amino-1-(5-phospho-D-ribosyl)imidazole-4-carboxamide from 5-amino-1-(5-phospho-D-ribosyl)imidazole-4-carboxylate: step 1/2. The chain is Phosphoribosylaminoimidazole-succinocarboxamide synthase from Streptococcus agalactiae serotype Ia (strain ATCC 27591 / A909 / CDC SS700).